The chain runs to 511 residues: uncharacterized protein (511 aa).

14 helical membrane passes run 7–27 (WVIS…NTAL), 46–66 (VNPI…GPLL), 80–100 (LPVF…ALMA), 107–127 (GAAT…SFPI), 134–154 (LLVL…LGTI), 163–183 (WLFF…YFFL), 200–220 (AGIL…IFLQ), 226–246 (SGYV…LLIV), 266–286 (VLGL…LSAF), 301–321 (LILL…LSAL), 329–349 (GMLG…WLHI), 357–377 (MFAA…AAGL), 394–414 (TAVQ…IGFF), and 437–457 (LFFI…CMNA). A disordered region spans residues 465 to 486 (AHKPHDKAKTAPEKPAVSAQGL).

The protein belongs to the major facilitator superfamily.

It localises to the cell membrane. This is an uncharacterized protein from Bacillus subtilis (strain 168).